The following is a 408-amino-acid chain: Multidrug resistance protein MdtG (408 aa).

The next 11 helical transmembrane spans lie at 16–36, 58–78, 92–112, 115–135, 146–166, 173–193, 224–244, 256–276, 290–310, 319–339, and 378–398; these read LIVAWLGCFLTGAAFSLVMPF, IVFSITFLFSAIASPFWGGLA, LGMGIVMVLMGLAQNIWQFLI, ALLGLLGGFVPNANALIATQV, TLSTGGVSGALLGPMAGGLLA, PVFFITASVLILCFFVTLFCI, LFVTTLIIQVATGSIAPILTL, VAFISGMIASVPGVAALLSAP, ILITALIFSVLLLIPMSYVQT, FLLGAADGALLPAVQTLLVYN, and AVFLVTAGVVLFNAVYSWNSL.

The protein belongs to the major facilitator superfamily. DHA1 family. MdtG (TC 2.A.1.2.20) subfamily.

Its subcellular location is the cell inner membrane. Its function is as follows. Confers resistance to fosfomycin and deoxycholate. The protein is Multidrug resistance protein MdtG of Escherichia coli O81 (strain ED1a).